A 348-amino-acid polypeptide reads, in one-letter code: Calcium homeostasis modulator protein 1 (348 aa).

Over 1-20 (MDKFRMIFQFLQSNQESFMN) the chain is Cytoplasmic. Residues 9-36 (QFLQSNQESFMNGICGIMALASAQMYSA) form a central pore region. The chain crosses the membrane as a helical span at residues 21-36 (GICGIMALASAQMYSA). Over 37-48 (FDFNCPCLPGYN) the chain is Extracellular. Cystine bridges form between cysteine 41/cysteine 126 and cysteine 43/cysteine 160. Residues 49-71 (VVYSLGILLTPPLVLFLLGLVMN) traverse the membrane as a helical segment. The interval 62–69 (VLFLLGLV) is phospholipid-binding. Residues 72-98 (NNISMLAEEWKRPAGRRAKDPAVLRYM) lie on the Cytoplasmic side of the membrane. The helical transmembrane segment at 99-124 (FCSMAQRALIAPVVWVAVTLLDGKCF) threads the bilayer. Cysteine 100 carries S-palmitoyl cysteine lipidation. Positions 104-116 (QRALIAPVVWVAV) are phospholipid-binding. At 125–179 (LCAFCTAVPVATLGNGSLVPGLPAPELARLLARVPCPEIYDGNWLLAREVAVRYL) the chain is on the extracellular side. N-linked (GlcNAc...) asparagine glycosylation is present at asparagine 139. Residues 180 to 205 (RCISQALGWSFVLLTTLLAFVVRSVR) traverse the membrane as a helical segment. The segment at 191-201 (VLLTTLLAFVV) is phospholipid-binding. Topologically, residues 206 to 348 (PCFTQVAFLK…KEVATYFSKV (143 aa)) are cytoplasmic. A lipid anchor (S-palmitoyl cysteine) is attached at cysteine 207. Residues 324–348 (LMSNGWAGGEPRPPRKEVATYFSKV) are disordered.

Belongs to the CALHM family. In terms of assembly, oligomerizes to form hexamers and octamers. Does not form gap junctions. Associates with CALHM3 as a pore-forming subunit in a hetero-hexameric channel complex. Post-translationally, N-glycosylated. Assembly with CALHM3 is associated with N-glycan remodeling and formation of hybrid complex- and high mannose-type glycochains. This N-glycan processing regulates channel trafficking and gating kinetics. In terms of processing, palmitoylated by ZDHHC3, ZDHHC20 and possibly ZDHHC7. Palmitoylation regulates voltage-dependent gating of the channel by shifting it toward more depolarized potentials. Specifically expressed in type II taste bud cells (at protein level). Not expressed in brain.

It localises to the cell membrane. Its subcellular location is the endoplasmic reticulum membrane. It is found in the basolateral cell membrane. The enzyme catalyses ATP(in) = ATP(out). It carries out the reaction Ca(2+)(in) = Ca(2+)(out). It catalyses the reaction Mg(2+)(in) = Mg(2+)(out). The catalysed reaction is Na(+)(in) = Na(+)(out). The enzyme catalyses K(+)(in) = K(+)(out). It carries out the reaction Li(+)(in) = Li(+)(out). It catalyses the reaction Rb(+)(in) = Rb(+)(out). The catalysed reaction is Cs(+)(in) = Cs(+)(out). The enzyme catalyses chloride(in) = chloride(out). With respect to regulation, regulated by membrane voltage and extracellular Ca(2+). Inhibited by Gd(3+), ruthenium red, and Zn(2+) and partially inhibited by 2-aminoethoxydiphenyl borate. Pore-forming subunit of gustatory voltage-gated ion channels required for sensory perception of sweet, bitter and umami tastes. With CALHM3 forms a fast-activating voltage-gated ATP-release channel in type II taste bud cells, ATP acting as a neurotransmitter to activate afferent neural gustatory pathways. Acts both as a voltage-gated and calcium-activated ion channel: mediates neuronal excitability in response to membrane depolarization and low extracellular Ca(2+) concentration. Has poor ion selectivity and forms a wide pore (around 14 Angstroms) that mediates permeation of small ions including Ca(2+), Na(+), K(+) and Cl(-), as well as larger ions such as ATP(4-). Mediates Ca(2+) influx and downstream activation of the ERK1 and ERK2 cascade in neurons. Triggers endoplasmic reticulum stress by reducing the calcium content of the endoplasmic reticulum. May indirectly control amyloid precursor protein (APP) proteolysis and aggregated amyloid-beta (Abeta) peptides levels in a Ca(2+) dependent manner. The protein is Calcium homeostasis modulator protein 1 of Mus musculus (Mouse).